The sequence spans 750 residues: Photosystem I P700 chlorophyll a apoprotein A1 (750 aa).

A run of 8 helical transmembrane segments spans residues 72 to 95 (VFSAHFGQLAVIFIWLSGMYFHGA), 158 to 181 (LYSTAIGGLVMAGLMLFAGWFHYH), 197 to 221 (LNHHLAGLLGLGSLSWAGHQIHVSL), 293 to 311 (TAHHHLAIAVLFLVAGHMY), 348 to 371 (WHAQLAINLALFGSLSIIVAHHMY), 387 to 413 (LSIFTHHTWIGGFCIVGGAAHAAIFMV), 435 to 457 (AIISHLNWVCIFLGFHSFGLYIH), and 532 to 550 (FLVHHIHAFTIHVTVLILL). The [4Fe-4S] cluster site is built by Cys-574 and Cys-583. A run of 2 helical transmembrane segments spans residues 590–611 (HVFLGLFWMYNSLSIAIFHFSW) and 664–686 (LSAYGLMFLGAHFVWAFSLMFLF). Residue His-675 participates in chlorophyll a' binding. Chlorophyll a is bound by residues Met-683 and Tyr-691. Trp-692 serves as a coordination point for phylloquinone. Residues 724–744 (AVGVAHYLLGGIATTWAFFLA) traverse the membrane as a helical segment.

Belongs to the PsaA/PsaB family. As to quaternary structure, the PsaA/B heterodimer binds the P700 chlorophyll special pair and subsequent electron acceptors. PSI consists of a core antenna complex that captures photons, and an electron transfer chain that converts photonic excitation into a charge separation. The eukaryotic PSI reaction center is composed of at least 11 subunits. It depends on P700 is a chlorophyll a/chlorophyll a' dimer, A0 is one or more chlorophyll a, A1 is one or both phylloquinones and FX is a shared 4Fe-4S iron-sulfur center. as a cofactor.

The protein localises to the plastid. It is found in the chloroplast thylakoid membrane. It carries out the reaction reduced [plastocyanin] + hnu + oxidized [2Fe-2S]-[ferredoxin] = oxidized [plastocyanin] + reduced [2Fe-2S]-[ferredoxin]. PsaA and PsaB bind P700, the primary electron donor of photosystem I (PSI), as well as the electron acceptors A0, A1 and FX. PSI is a plastocyanin-ferredoxin oxidoreductase, converting photonic excitation into a charge separation, which transfers an electron from the donor P700 chlorophyll pair to the spectroscopically characterized acceptors A0, A1, FX, FA and FB in turn. Oxidized P700 is reduced on the lumenal side of the thylakoid membrane by plastocyanin. In Chlorokybus atmophyticus (Soil alga), this protein is Photosystem I P700 chlorophyll a apoprotein A1.